We begin with the raw amino-acid sequence, 257 residues long: Movement protein (257 aa).

Residues 212 to 257 are disordered; sequence NQSKKGSNKYVGKRNDNKGLNKEGKLFDKVRIGQNSESSDAESSSF. The segment covering 224–242 has biased composition (basic and acidic residues); that stretch reads KRNDNKGLNKEGKLFDKVR. Residues 247 to 257 are compositionally biased toward low complexity; it reads SESSDAESSSF.

The protein belongs to the tobamovirus movement protein family.

The protein localises to the host cytoplasm. It is found in the host cytoskeleton. The protein resides in the host cell junction. Its subcellular location is the host plasmodesma. Functionally, transports viral genome to neighboring plant cells directly through plasmosdesmata, without any budding. The movement protein allows efficient cell to cell propagation, by bypassing the host cell wall barrier. Forms a ribonucleoprotein complex with viral RNA. Binds microtubules and modulates microtubule stability. Can bind double-stranded DNA. This Vicia faba (Broad bean) protein is Movement protein (MP).